A 182-amino-acid polypeptide reads, in one-letter code: Large ribosomal subunit protein uL13 (182 aa).

It belongs to the universal ribosomal protein uL13 family. As to quaternary structure, part of the 50S ribosomal subunit.

In terms of biological role, this protein is one of the early assembly proteins of the 50S ribosomal subunit, although it is not seen to bind rRNA by itself. It is important during the early stages of 50S assembly. The sequence is that of Large ribosomal subunit protein uL13 from Pyrobaculum neutrophilum (strain DSM 2338 / JCM 9278 / NBRC 100436 / V24Sta) (Thermoproteus neutrophilus).